The following is a 182-amino-acid chain: ADP-ribosylation factor-like protein 3 (182 aa).

Gly2 carries N-myristoyl glycine lipidation. At Ser5 the chain carries Phosphoserine. Residues 24–31 (GLDNAGKT), Thr48, 67–71 (DIGGQ), Gly70, 126–129 (NKQD), and 159–161 (SAL) each bind GTP. Mg(2+)-binding residues include Thr31 and Thr48.

It belongs to the small GTPase superfamily. Arf family. As to quaternary structure, found in a complex with ARL3, RP2 and UNC119 (or UNC119B); RP2 induces hydrolysis of GTP ARL3 in the complex, leading to the release of UNC119 (or UNC119B). Interacts with RP2; interaction is direct and stimulated with the activated GTP-bound form of ARL3. Interacts with SYS1. Interacts with ARL2BP; the GTP-bound form interacts with ARL2BP. Microtubule-associated protein. Does not interact with TBCC. Interacts with RP2. Interacts with PDE6D; the interaction occurs specifically with the GTP-bound form of ARL3. Interacts with GGA1; the interaction recruits PKD1:PKD2 complex to trans-Golgi network and is required for ciliary targeting of PKD1:PKD2 complex. Interacts with DNAAF9.

It localises to the golgi apparatus membrane. Its subcellular location is the cytoplasm. The protein localises to the cytoskeleton. The protein resides in the spindle. It is found in the nucleus. It localises to the microtubule organizing center. Its subcellular location is the centrosome. The protein localises to the cell projection. The protein resides in the cilium. Functionally, small GTP-binding protein which cycles between an inactive GDP-bound and an active GTP-bound form, and the rate of cycling is regulated by guanine nucleotide exchange factors (GEF) and GTPase-activating proteins (GAP). Required for normal cytokinesis and cilia signaling. Requires assistance from GTPase-activating proteins (GAPs) like RP2 and PDE6D, in order to cycle between inactive GDP-bound and active GTP-bound forms. Required for targeting proteins to the cilium, including myristoylated NPHP3 and prenylated INPP5E. Targets NPHP3 to the ciliary membrane by releasing myristoylated NPHP3 from UNC119B cargo adapter into the cilium. Required for PKD1:PKD2 complex targeting from the trans-Golgi network to the cilium. This is ADP-ribosylation factor-like protein 3 (ARL3) from Sus scrofa (Pig).